Here is a 504-residue protein sequence, read N- to C-terminus: ATP synthase subunit alpha, chloroplastic (504 aa).

170–177 (GDRQTGKT) contacts ATP.

It belongs to the ATPase alpha/beta chains family. F-type ATPases have 2 components, CF(1) - the catalytic core - and CF(0) - the membrane proton channel. CF(1) has five subunits: alpha(3), beta(3), gamma(1), delta(1), epsilon(1). CF(0) has four main subunits: a, b, b' and c.

The protein resides in the plastid. It localises to the chloroplast thylakoid membrane. It catalyses the reaction ATP + H2O + 4 H(+)(in) = ADP + phosphate + 5 H(+)(out). Functionally, produces ATP from ADP in the presence of a proton gradient across the membrane. The alpha chain is a regulatory subunit. The polypeptide is ATP synthase subunit alpha, chloroplastic (Jasminum nudiflorum (Winter jasmine)).